A 360-amino-acid chain; its full sequence is DNA replication and repair protein RecF (360 aa).

Position 30–37 (30–37 (GQNGSGKT)) interacts with ATP.

It belongs to the RecF family.

Its subcellular location is the cytoplasm. In terms of biological role, the RecF protein is involved in DNA metabolism; it is required for DNA replication and normal SOS inducibility. RecF binds preferentially to single-stranded, linear DNA. It also seems to bind ATP. The polypeptide is DNA replication and repair protein RecF (Shewanella sp. (strain W3-18-1)).